The sequence spans 238 residues: 1-(5-phosphoribosyl)-5-[(5-phosphoribosylamino)methylideneamino] imidazole-4-carboxamide isomerase (238 aa).

Catalysis depends on aspartate 8, which acts as the Proton acceptor. The active-site Proton donor is aspartate 130.

Belongs to the HisA/HisF family.

It localises to the cytoplasm. The enzyme catalyses 1-(5-phospho-beta-D-ribosyl)-5-[(5-phospho-beta-D-ribosylamino)methylideneamino]imidazole-4-carboxamide = 5-[(5-phospho-1-deoxy-D-ribulos-1-ylimino)methylamino]-1-(5-phospho-beta-D-ribosyl)imidazole-4-carboxamide. Its pathway is amino-acid biosynthesis; L-histidine biosynthesis; L-histidine from 5-phospho-alpha-D-ribose 1-diphosphate: step 4/9. In Methanococcus maripaludis (strain C6 / ATCC BAA-1332), this protein is 1-(5-phosphoribosyl)-5-[(5-phosphoribosylamino)methylideneamino] imidazole-4-carboxamide isomerase.